The following is a 311-amino-acid chain: Heme A synthase (311 aa).

At 1–6 (MQRFIK) the chain is on the cytoplasmic side. Residues 7–27 (WLAVITSLDLLIVLLGGALVT) traverse the membrane as a helical segment. Topologically, residues 28–62 (KTGSGQGCGKSWPLCNGEFVPSNLSMETIIELSHR) are extracellular. A disulfide bond links cysteine 35 and cysteine 42. Residue glutamate 58 is part of the active site. Histidine 61 lines the heme o pocket. Residues 63-83 (LTSGSAGILVTLLCILSWKYY) form a helical membrane-spanning segment. Over 84–91 (KHVRETKT) the chain is Cytoplasmic. A helical membrane pass occupies residues 92 to 112 (LAILSFVFLVAQALMGAAAVV). The Extracellular segment spans residues 113–121 (WGQMPAVLA). The chain crosses the membrane as a helical span at residues 122-142 (IHFGISLISFASVILLTCLIF). Histidine 123 lines the heme o pocket. The Cytoplasmic portion of the chain corresponds to 143 to 159 (EIDQKFDARSLIMDKKM). Residues 160 to 180 (KFHIYGVTIYSYIVVYTGALV) form a helical membrane-spanning segment. The Extracellular segment spans residues 181–211 (RHERASLACPDFPLCSKNRPMPTQLHEWVQM). An intrachain disulfide couples cysteine 189 to cysteine 195. A helical transmembrane segment spans residues 212 to 232 (GHRVAAMLIFAWILYAMILAI). Heme b is bound at residue histidine 213. The Cytoplasmic segment spans residues 233–243 (RHYKQQPVVYW). A helical membrane pass occupies residues 244-264 (GWIISFILVTLQAIVGILVVF). Residues 265–271 (TNASLSM) lie on the Extracellular side of the membrane. The chain crosses the membrane as a helical span at residues 272–292 (ALLHSLFISCLFAVLCYLVML). Histidine 275 contacts heme b. The Cytoplasmic portion of the chain corresponds to 293–311 (GTRSKVNAKEAASISKQTK).

This sequence belongs to the COX15/CtaA family. Type 1 subfamily. As to quaternary structure, interacts with CtaB. Heme b serves as cofactor.

Its subcellular location is the cell membrane. It carries out the reaction Fe(II)-heme o + 2 A + H2O = Fe(II)-heme a + 2 AH2. Its pathway is porphyrin-containing compound metabolism; heme A biosynthesis; heme A from heme O: step 1/1. Catalyzes the conversion of heme O to heme A by two successive hydroxylations of the methyl group at C8. The first hydroxylation forms heme I, the second hydroxylation results in an unstable dihydroxymethyl group, which spontaneously dehydrates, resulting in the formyl group of heme A. In Bacillus cereus (strain AH187), this protein is Heme A synthase.